The chain runs to 100 residues: Urease subunit gamma (100 aa).

Belongs to the urease gamma subunit family. As to quaternary structure, heterotrimer of UreA (gamma), UreB (beta) and UreC (alpha) subunits. Three heterotrimers associate to form the active enzyme.

It is found in the cytoplasm. It carries out the reaction urea + 2 H2O + H(+) = hydrogencarbonate + 2 NH4(+). It functions in the pathway nitrogen metabolism; urea degradation; CO(2) and NH(3) from urea (urease route): step 1/1. The chain is Urease subunit gamma from Actinobacillus pleuropneumoniae (Haemophilus pleuropneumoniae).